A 238-amino-acid chain; its full sequence is Probable transcriptional regulatory protein SERP0322 (238 aa).

It belongs to the TACO1 family. YeeN subfamily.

It localises to the cytoplasm. This is Probable transcriptional regulatory protein SERP0322 from Staphylococcus epidermidis (strain ATCC 35984 / DSM 28319 / BCRC 17069 / CCUG 31568 / BM 3577 / RP62A).